A 513-amino-acid chain; its full sequence is Glycogen synthase (513 aa).

Lys47 contacts ADP-alpha-D-glucose.

Belongs to the glycosyltransferase 1 family. Bacterial/plant glycogen synthase subfamily.

The catalysed reaction is [(1-&gt;4)-alpha-D-glucosyl](n) + ADP-alpha-D-glucose = [(1-&gt;4)-alpha-D-glucosyl](n+1) + ADP + H(+). The protein operates within glycan biosynthesis; glycogen biosynthesis. In terms of biological role, synthesizes alpha-1,4-glucan chains using ADP-glucose. The polypeptide is Glycogen synthase (Pseudomonas paraeruginosa (strain DSM 24068 / PA7) (Pseudomonas aeruginosa (strain PA7))).